A 258-amino-acid polypeptide reads, in one-letter code: Alpha-hydroxynitrile lyase (258 aa).

Catalysis depends on proton donor/acceptor residues S81 and H236.

The protein belongs to the AB hydrolase superfamily. Hydroxynitrile lyase family. As to quaternary structure, homodimer.

It carries out the reaction (R)-mandelonitrile = benzaldehyde + hydrogen cyanide. Functionally, involved in cyanogenesis, the release of HCN from injured tissues. Displays R-selective hydroxynitrile lyase activity. Also accepts nitromethane (MeNO2) as a donor in a reaction with aromatic aldehydes to yield (R)-beta-nitro alcohols. The sequence is that of Alpha-hydroxynitrile lyase from Arabidopsis thaliana (Mouse-ear cress).